A 317-amino-acid chain; its full sequence is Xylose/arabinose import permease protein XacH (317 aa).

6 helical membrane-spanning segments follow: residues 40 to 60 (GIPF…NFAI), 98 to 118 (LVLL…LAIL), 132 to 152 (VYLL…LWMF), 179 to 199 (IALG…TMVV), 241 to 261 (AAVV…ALVG), and 290 to 310 (AAIA…YLYY). The ABC transmembrane type-1 domain occupies 94–309 (AQNNLVLLVG…ALGVIGPYLY (216 aa)).

The protein belongs to the binding-protein-dependent transport system permease family. In terms of assembly, the complex is composed of two ATP-binding proteins (XacJ and XacK), two transmembrane proteins (XacH and XacI) and a solute-binding protein (XacG).

The protein resides in the cell membrane. In terms of biological role, part of the ABC transporter complex XacGHIJK involved in the uptake of xylose and arabinose. Responsible for the translocation of the substrate across the membrane. The chain is Xylose/arabinose import permease protein XacH from Haloferax volcanii (strain ATCC 29605 / DSM 3757 / JCM 8879 / NBRC 14742 / NCIMB 2012 / VKM B-1768 / DS2) (Halobacterium volcanii).